A 251-amino-acid polypeptide reads, in one-letter code: NADPH-dependent oxidoreductase (251 aa).

Belongs to the flavin oxidoreductase frp family. The cofactor is FMN.

In terms of biological role, reduces FMN, organic nitro compounds and disulfide DTNB. Involved in maintenance of the cellular redox state and the disulfide stress response. The chain is NADPH-dependent oxidoreductase (nfrA) from Staphylococcus aureus (strain MSSA476).